The sequence spans 406 residues: Inactive serine protease 35 (406 aa).

An N-terminal signal peptide occupies residues 1 to 17 (MLLWLIIFVSGWTLSLG). N-linked (GlcNAc...) asparagine glycosylation occurs at asparagine 87. Residues 121–401 (VYGTDSRFSI…ICLWIHGNAA (281 aa)) form the Peptidase S1 domain. Cysteines 151 and 167 form a disulfide. Positions 186–204 (LKMRNKGGRKKRRGSRRSR) are enriched in basic residues. Residues 186–248 (LKMRNKGGRK…RPSFQWTRVK (63 aa)) are disordered.

The protein belongs to the peptidase S1 family.

The protein localises to the secreted. This chain is Inactive serine protease 35 (Prss35), found in Rattus norvegicus (Rat).